Reading from the N-terminus, the 49-residue chain is Large ribosomal subunit protein bL33 (49 aa).

The protein belongs to the bacterial ribosomal protein bL33 family.

In Desulforudis audaxviator (strain MP104C), this protein is Large ribosomal subunit protein bL33.